The primary structure comprises 403 residues: Double C2-like domain-containing protein alpha (403 aa).

Residues 1-92 form an interaction with UNC13D and DYNLT1 region; the sequence is MRGRRGDRMT…DSYDSDDTTA (92 aa). 2 consecutive C2 domains span residues 92 to 214 and 254 to 387; these read ALGT…HFNI and ERGR…ERWH. Ca(2+) contacts are provided by D123, D129, D184, D186, D285, D291, D345, D347, and D353. The interval 218–403 is interaction with UNC13D; it reads RQVPLPSPSS…PPAAGALPLA (186 aa).

Interacts (via N-terminus) with UNC13A. Interacts with cytoplasmic dynein light chain DYNLT1. Interacts with UNC13D. It depends on Ca(2+) as a cofactor. As to expression, predominantly expressed in brain. Also found in non-neural tissues. Expressed in RBL-2H3 mast cell line.

It localises to the cytoplasmic vesicle. Its subcellular location is the secretory vesicle. The protein resides in the synaptic vesicle membrane. The protein localises to the synapse. It is found in the synaptosome. It localises to the lysosome. Calcium sensor which most probably regulates fusion of vesicles with membranes. Binds calcium and phospholipids. May be involved in calcium dependent neurotransmitter release through the interaction with UNC13A. May be involved in calcium-dependent spontaneous release of neurotransmitter in absence of action potentials in neuronal cells. Regulates Ca(2+)-dependent secretory lysosome exocytosis in mast cells. This chain is Double C2-like domain-containing protein alpha (Doc2a), found in Rattus norvegicus (Rat).